We begin with the raw amino-acid sequence, 917 residues long: Dolichyl-phosphooligosaccharide-protein glycotransferase (917 aa).

The span at 1 to 10 shows a compositional bias: basic and acidic residues; the sequence is MTENNEKVKN. Positions 1–20 are disordered; it reads MTENNEKVKNSDSANNQSSK. At 1-38 the chain is on the cytoplasmic side; the sequence is MTENNEKVKNSDSANNQSSKNSKFNFNFEDKKVKCAKT. The span at 11–20 shows a compositional bias: low complexity; the sequence is SDSANNQSSK. A helical membrane pass occupies residues 39-59; it reads ILIIIFLAFLSFQMRAQTADM. Residues 60–154 lie on the Extracellular side of the membrane; it reads GFTTNEQYLD…AMDSTVTLMN (95 aa). A DXD motif 1 motif is present at residues 82–84; sequence ALD. A Mn(2+)-binding site is contributed by Asp84. A helical transmembrane segment spans residues 155 to 175; it reads AAFWVPAILSMFLITPIFFTV. Residues 176–182 lie on the Cytoplasmic side of the membrane; the sequence is RRITSSD. A helical transmembrane segment spans residues 183-203; it reads IGGAVAAILASLSPSIFVKTV. Over 204–209 the chain is Extracellular; the sequence is AGFSDT. Asp208 provides a ligand contact to Mn(2+). The DXD motif 2 motif lies at 208–210; that stretch reads DTP. Residues 210 to 230 form a helical membrane-spanning segment; the sequence is PILEILPLLFIVWFIIEAIHY. Over 231 to 237 the chain is Cytoplasmic; sequence SKEKNYK. A helical membrane pass occupies residues 238-260; it reads SLIYGLLATLMLALYPFMWSAWW. Residues 261–263 lie on the Extracellular side of the membrane; the sequence is YGY. A helical membrane pass occupies residues 264–286; sequence YIVIAFLVIYAIYKGISYNSIAK. Residues 287–308 lie on the Cytoplasmic side of the membrane; sequence YTKSKNNNHKDKIESEKLEMLN. A helical membrane pass occupies residues 309 to 329; the sequence is ILKISGLFIIGGAVLITALYG. Over 330-372 the chain is Extracellular; sequence VSTTMNALQAPLNYLGLDEVSSQTGWPNVLTTVSELDTASLDE. The short motif at 361–364 is the TIXE motif element; that stretch reads TVSE. Residue Glu364 coordinates Mn(2+). A helical membrane pass occupies residues 373–393; that stretch reads IISSSLGSIHLFAIGLIGIFL. Topologically, residues 394 to 413 are cytoplasmic; the sequence is SLFRKVLTPVKQISNGLAEK. Residues 414-434 traverse the membrane as a helical segment; that stretch reads LDIKYALLLIIWFAVTFLAAS. Residues 435–438 lie on the Extracellular side of the membrane; the sequence is KGVR. An a glycophospholipid-binding site is contributed by Arg438. The helical transmembrane segment at 439–459 threads the bilayer; the sequence is FVALMVPPLSIGVGIFVGFIE. Residues 460–469 lie on the Cytoplasmic side of the membrane; it reads QFIKNNLDKK. Residues 470 to 490 form a helical membrane-spanning segment; sequence YEYVAYPTIAIIVLYALFTIY. The Extracellular segment spans residues 491-506; the sequence is RADSADLVRMLLPSNY. A helical membrane pass occupies residues 507–527; it reads VPIAEGIMLASLAVLIIYKVA. Over 528-541 the chain is Cytoplasmic; that stretch reads ELIAESNKKLVMNK. A helical membrane pass occupies residues 542-562; it reads IFMILLAIGLITPTIATIVPF. The Extracellular segment spans residues 563-917; sequence YSVPTYNDGW…FSVDYGNYSK (355 aa). Positions 592–594 are interacts with target acceptor peptide in protein substrate; the sequence is WWD. Positions 592–596 match the WWDYG motif motif; sequence WWDNG. The MI motif signature appears at 719 to 726; the sequence is MTSIASVW.

It belongs to the STT3 family. Mn(2+) serves as cofactor. Mg(2+) is required as a cofactor.

It localises to the cell membrane. The catalysed reaction is an archaeal dolichyl phosphooligosaccharide + [protein]-L-asparagine = an archaeal dolichyl phosphate + a glycoprotein with the oligosaccharide chain attached by N-beta-D-glycosyl linkage to a protein L-asparagine.. It functions in the pathway cell surface structure biogenesis; S-layer biogenesis. Its pathway is protein modification; protein glycosylation. In terms of biological role, oligosaccharyl transferase (OST) that catalyzes the initial transfer of a defined glycan (ManNAcGlc-2,3-diNAcAGlcNAc in M.voltae) from the lipid carrier dolichol-monophosphate to an asparagine residue within an Asn-X-Ser/Thr consensus motif in nascent polypeptide chains, the first step in protein N-glycosylation. Involved in the assembly of an N-linked disaccharide that decorates the S-layer glycoprotein and flagellins. In Methanococcus voltae, this protein is Dolichyl-phosphooligosaccharide-protein glycotransferase.